The chain runs to 120 residues: UPF0102 protein TW312 (120 aa).

The protein belongs to the UPF0102 family.

In Tropheryma whipplei (strain TW08/27) (Whipple's bacillus), this protein is UPF0102 protein TW312.